The sequence spans 372 residues: Protein RecA (372 aa).

77–84 (GPESSGKT) serves as a coordination point for ATP.

It belongs to the RecA family.

It is found in the cytoplasm. Its function is as follows. Can catalyze the hydrolysis of ATP in the presence of single-stranded DNA, the ATP-dependent uptake of single-stranded DNA by duplex DNA, and the ATP-dependent hybridization of homologous single-stranded DNAs. It interacts with LexA causing its activation and leading to its autocatalytic cleavage. This chain is Protein RecA, found in Corynebacterium diphtheriae (strain ATCC 700971 / NCTC 13129 / Biotype gravis).